We begin with the raw amino-acid sequence, 553 residues long: MYCVQCEQTMITPKGNGCSFSQGMCGKTAETSDLQDLLIACLHSLSAWAVKAREYGIINHEADNFAPRAFFATLTNVNFDSARIAGYAQQALIYRNQLIKAVSAFESNPTLDHPLANIELNGVSVDKLARQAKQFALDTDRAKIGEEAHGVRLLCLYGLKGAAAYMEHAYVLDKFDNDIYAQYHGFMSWLGTHPSDLNELLEKALAIGSMNFNVMAMLDAGETEHFGNPVPAMVNVRPVKGKCILISGHDLKDLKELLEQTEGKGINVYTHGEMLPAHGYPELKKYKHLVGNFGSGWQNQQKEFARFPGAIVMTSNCLIDPNVGDYADRIFTRNIVGWPGVTHLEEHDFSPVIEKALECDGFPYTELEHLITVGFGRKTLIDASDAVIDLVKAGKLSHVFVIGGCDGDKEERHYYTDLAYALPKDTAVLTLGCGKYRFNKLDFGTIDGGLPRLLDAGQCNDTYSAIMLAVTLSQKLGIGLNELPLSIVLSWFEQKAIIVLLTLLALGVKNVYSGPSKPAFLNDNVMALLHEKFGLSGLTTPEQDFGHIIGKNA.

Residues Cys-3, Cys-6, Cys-18, and Cys-25 each coordinate [2Fe-2S] cluster. 8 residues coordinate hybrid [4Fe-2O-2S] cluster: His-249, Glu-273, Cys-317, Cys-405, Cys-433, Cys-459, Glu-493, and Lys-495. Cys-405 carries the cysteine persulfide modification.

This sequence belongs to the HCP family. [2Fe-2S] cluster serves as cofactor. The cofactor is hybrid [4Fe-2O-2S] cluster.

The protein resides in the cytoplasm. It catalyses the reaction A + NH4(+) + H2O = hydroxylamine + AH2 + H(+). Its function is as follows. Catalyzes the reduction of hydroxylamine to form NH(3) and H(2)O. The protein is Hydroxylamine reductase of Actinobacillus succinogenes (strain ATCC 55618 / DSM 22257 / CCUG 43843 / 130Z).